A 40-amino-acid chain; its full sequence is Photosystem II reaction center protein J (40 aa).

The helical transmembrane segment at 8–28 (IPLWLISTVTGTLVIGLMGIF) threads the bilayer.

It belongs to the PsbJ family. As to quaternary structure, PSII is composed of 1 copy each of membrane proteins PsbA, PsbB, PsbC, PsbD, PsbE, PsbF, PsbH, PsbI, PsbJ, PsbK, PsbL, PsbM, PsbT, PsbX, PsbY, PsbZ, Psb30/Ycf12, at least 3 peripheral proteins of the oxygen-evolving complex and a large number of cofactors. It forms dimeric complexes.

Its subcellular location is the plastid. It localises to the chloroplast thylakoid membrane. Its function is as follows. One of the components of the core complex of photosystem II (PSII). PSII is a light-driven water:plastoquinone oxidoreductase that uses light energy to abstract electrons from H(2)O, generating O(2) and a proton gradient subsequently used for ATP formation. It consists of a core antenna complex that captures photons, and an electron transfer chain that converts photonic excitation into a charge separation. This is Photosystem II reaction center protein J from Ginkgo biloba (Ginkgo).